Reading from the N-terminus, the 221-residue chain is Transcriptional regulator GfcR (221 aa).

The disordered stretch occupies residues 35–59 (ASWLVERSQPTDNSQSSSANNPTEA). Positions 42–57 (SQPTDNSQSSSANNPT) are enriched in polar residues.

The protein belongs to the purine/pyrimidine phosphoribosyltransferase family. GfcR subfamily.

DNA-binding transcriptional regulator that functions as a regulator of central sugar catabolic pathways. The polypeptide is Transcriptional regulator GfcR (Haloquadratum walsbyi (strain DSM 16790 / HBSQ001)).